The primary structure comprises 76 residues: Zinc finger protein 706 (76 aa).

Positions 1 to 13 (MARGQQKIQSQQK) are enriched in low complexity. Disordered regions lie at residues 1–32 (MARGQQKIQSQQKNAKKQAEQKKKQGHDQKAA) and 53–76 (TFKQHFESKHPKTPLPPELADVQA). Composition is skewed to basic and acidic residues over residues 17-31 (KQAEQKKKQGHDQKA) and 53-62 (TFKQHFESKH). Residues 39-62 (YTCTVCRTQMPDPKTFKQHFESKH) form a C2H2-type zinc finger.

The protein localises to the cytoplasm. It localises to the nucleus. Its function is as follows. Transcription repressor involved in the exit of embryonic stem cells (ESCs) from self-renewal. This Gallus gallus (Chicken) protein is Zinc finger protein 706.